The primary structure comprises 205 residues: Large ribosomal subunit protein uL4 (205 aa).

The segment at 56–76 (VSGTTAKPYRQKHTGRARQGS) is disordered.

It belongs to the universal ribosomal protein uL4 family. In terms of assembly, part of the 50S ribosomal subunit.

In terms of biological role, one of the primary rRNA binding proteins, this protein initially binds near the 5'-end of the 23S rRNA. It is important during the early stages of 50S assembly. It makes multiple contacts with different domains of the 23S rRNA in the assembled 50S subunit and ribosome. Forms part of the polypeptide exit tunnel. The chain is Large ribosomal subunit protein uL4 from Ehrlichia ruminantium (strain Welgevonden).